Here is a 337-residue protein sequence, read N- to C-terminus: Holliday junction branch migration complex subunit RuvB (337 aa).

The segment at 1-179 is large ATPase domain (RuvB-L); the sequence is MTHQVSVLHQ…FSFSGRVSYY (179 aa). ATP-binding positions include leucine 18, arginine 19, glycine 60, lysine 63, threonine 64, serine 65, 126–128, arginine 169, tyrosine 179, and arginine 216; that span reads EDY. Threonine 64 contributes to the Mg(2+) binding site. Positions 180–250 are small ATPAse domain (RuvB-S); the sequence is SDEDLATILK…VAEKALSMLL (71 aa). Positions 253–337 are head domain (RuvB-H); that stretch reads DWGLNEIDIK…DNLQILGEEK (85 aa). The DNA site is built by lysine 308 and arginine 313.

This sequence belongs to the RuvB family. As to quaternary structure, homohexamer. Forms an RuvA(8)-RuvB(12)-Holliday junction (HJ) complex. HJ DNA is sandwiched between 2 RuvA tetramers; dsDNA enters through RuvA and exits via RuvB. An RuvB hexamer assembles on each DNA strand where it exits the tetramer. Each RuvB hexamer is contacted by two RuvA subunits (via domain III) on 2 adjacent RuvB subunits; this complex drives branch migration. In the full resolvosome a probable DNA-RuvA(4)-RuvB(12)-RuvC(2) complex forms which resolves the HJ.

It is found in the cytoplasm. The catalysed reaction is ATP + H2O = ADP + phosphate + H(+). Its function is as follows. The RuvA-RuvB-RuvC complex processes Holliday junction (HJ) DNA during genetic recombination and DNA repair, while the RuvA-RuvB complex plays an important role in the rescue of blocked DNA replication forks via replication fork reversal (RFR). RuvA specifically binds to HJ cruciform DNA, conferring on it an open structure. The RuvB hexamer acts as an ATP-dependent pump, pulling dsDNA into and through the RuvAB complex. RuvB forms 2 homohexamers on either side of HJ DNA bound by 1 or 2 RuvA tetramers; 4 subunits per hexamer contact DNA at a time. Coordinated motions by a converter formed by DNA-disengaged RuvB subunits stimulates ATP hydrolysis and nucleotide exchange. Immobilization of the converter enables RuvB to convert the ATP-contained energy into a lever motion, pulling 2 nucleotides of DNA out of the RuvA tetramer per ATP hydrolyzed, thus driving DNA branch migration. The RuvB motors rotate together with the DNA substrate, which together with the progressing nucleotide cycle form the mechanistic basis for DNA recombination by continuous HJ branch migration. Branch migration allows RuvC to scan DNA until it finds its consensus sequence, where it cleaves and resolves cruciform DNA. This is Holliday junction branch migration complex subunit RuvB from Chlamydia felis (strain Fe/C-56) (Chlamydophila felis).